A 266-amino-acid polypeptide reads, in one-letter code: Glucosamine-6-phosphate deaminase (266 aa).

Residue Asp72 is the Proton acceptor; for enolization step of the active site. Residue Asp141 is the For ring-opening step of the active site. The active-site Proton acceptor; for ring-opening step is His143. The For ring-opening step role is filled by Glu148.

The protein belongs to the glucosamine/galactosamine-6-phosphate isomerase family. NagB subfamily. As to quaternary structure, homohexamer.

It carries out the reaction alpha-D-glucosamine 6-phosphate + H2O = beta-D-fructose 6-phosphate + NH4(+). It functions in the pathway amino-sugar metabolism; N-acetylneuraminate degradation; D-fructose 6-phosphate from N-acetylneuraminate: step 5/5. Its activity is regulated as follows. Allosterically activated by N-acetylglucosamine 6-phosphate (GlcNAc6P). In terms of biological role, catalyzes the reversible isomerization-deamination of glucosamine 6-phosphate (GlcN6P) to form fructose 6-phosphate (Fru6P) and ammonium ion. The sequence is that of Glucosamine-6-phosphate deaminase from Klebsiella pneumoniae subsp. pneumoniae (strain ATCC 700721 / MGH 78578).